The following is a 324-amino-acid chain: Probable fructokinase-5 (324 aa).

The protein belongs to the carbohydrate kinase PfkB family.

It carries out the reaction D-fructose + ATP = D-fructose 6-phosphate + ADP + H(+). The protein operates within glycan biosynthesis; starch biosynthesis. In terms of biological role, may play an important role in maintaining the flux of carbon towards starch formation. This chain is Probable fructokinase-5, found in Arabidopsis thaliana (Mouse-ear cress).